The chain runs to 200 residues: Protein GrpE (200 aa).

Residues 1 to 27 show a composition bias toward basic and acidic residues; the sequence is MTKQEKAENQEKPTEETVEETPKKETP. The interval 1-50 is disordered; sequence MTKQEKAENQEKPTEETVEETPKKETPFEPVMEADEVEETTEAQAPVEEA. The segment covering 32–41 has biased composition (acidic residues); the sequence is MEADEVEETT.

Belongs to the GrpE family. As to quaternary structure, homodimer.

The protein localises to the cytoplasm. Participates actively in the response to hyperosmotic and heat shock by preventing the aggregation of stress-denatured proteins, in association with DnaK and GrpE. It is the nucleotide exchange factor for DnaK and may function as a thermosensor. Unfolded proteins bind initially to DnaJ; upon interaction with the DnaJ-bound protein, DnaK hydrolyzes its bound ATP, resulting in the formation of a stable complex. GrpE releases ADP from DnaK; ATP binding to DnaK triggers the release of the substrate protein, thus completing the reaction cycle. Several rounds of ATP-dependent interactions between DnaJ, DnaK and GrpE are required for fully efficient folding. This is Protein GrpE from Latilactobacillus sakei subsp. sakei (strain 23K) (Lactobacillus sakei subsp. sakei).